The following is a 572-amino-acid chain: Probable pyruvate decarboxylase C186.09 (572 aa).

The substrate site is built by Asp-38 and His-125. A thiamine pyrophosphate binding region spans residues 400–482 (DSWFGGMRIT…FLINNRGYTI (83 aa)). The Mg(2+) site is built by Asp-450, Asn-477, and Gly-479. Glu-483 contributes to the substrate binding site.

The protein belongs to the TPP enzyme family. In terms of assembly, homotetramer. It depends on a metal cation as a cofactor. Requires thiamine diphosphate as cofactor.

It carries out the reaction a 2-oxocarboxylate + H(+) = an aldehyde + CO2. This is Probable pyruvate decarboxylase C186.09 from Schizosaccharomyces pombe (strain 972 / ATCC 24843) (Fission yeast).